The primary structure comprises 164 residues: Transforming protein STP (164 aa).

Residues 1–41 (MARGLGEGDPQENDESNGDPPHNTDERSDGDDGPTPYLPVT) are disordered. A zinc finger lies at 122–135 (HSEHEQEGDKCTDC). Residues 136–161 (SVTILLLLVIIVLLLIIIGLMLVIMF) traverse the membrane as a helical segment.

The protein resides in the membrane. Stp is required for transformation, but it is not required for replication of the virus. The T-lymphocyte is the target cell for transformation by herpesvirus saimiri. The protein is Transforming protein STP (1) of Saimiriine herpesvirus 2 (strain 11) (SaHV-2).